We begin with the raw amino-acid sequence, 195 residues long: MKAALFLSALASTAVGVVAEELKIDVTLPVICERKTQKGDGVHMHYRGTLKDSGKQFDASYDRGTPLSFKVGAGQVIKGWDEGLLDMCIGEKRVLTIPPEFGYGQRAIGPIPAGSTLVFETELVGIDGVPKPEKIETKVVEGAESAAEAISEATEAAATASQKVAGKVAEAIVDAAKAAKTIIADTDDAPEHEEL.

A signal peptide spans 1-19; it reads MKAALFLSALASTAVGVVA. The 89-residue stretch at 39–127 folds into the PPIase FKBP-type domain; sequence GDGVHMHYRG…VFETELVGID (89 aa). The short motif at 192–195 is the Prevents secretion from ER element; it reads HEEL.

Belongs to the FKBP-type PPIase family. FKBP2 subfamily.

The protein resides in the endoplasmic reticulum. It carries out the reaction [protein]-peptidylproline (omega=180) = [protein]-peptidylproline (omega=0). With respect to regulation, inhibited by both FK506 and rapamycin. Its function is as follows. PPIases accelerate the folding of proteins. It catalyzes the cis-trans isomerization of proline imidic peptide bonds in oligopeptides. The protein is FK506-binding protein 2 (FPR2) of Gibberella zeae (strain ATCC MYA-4620 / CBS 123657 / FGSC 9075 / NRRL 31084 / PH-1) (Wheat head blight fungus).